We begin with the raw amino-acid sequence, 87 residues long: Translation initiation factor IF-1 2 (87 aa).

The region spanning 1-72 (MAKEELLELD…TKGRINFRHK (72 aa)) is the S1-like domain.

The protein belongs to the IF-1 family. Component of the 30S ribosomal translation pre-initiation complex which assembles on the 30S ribosome in the order IF-2 and IF-3, IF-1 and N-formylmethionyl-tRNA(fMet); mRNA recruitment can occur at any time during PIC assembly.

The protein resides in the cytoplasm. Functionally, one of the essential components for the initiation of protein synthesis. Stabilizes the binding of IF-2 and IF-3 on the 30S subunit to which N-formylmethionyl-tRNA(fMet) subsequently binds. Helps modulate mRNA selection, yielding the 30S pre-initiation complex (PIC). Upon addition of the 50S ribosomal subunit IF-1, IF-2 and IF-3 are released leaving the mature 70S translation initiation complex. This Burkholderia ambifaria (strain ATCC BAA-244 / DSM 16087 / CCUG 44356 / LMG 19182 / AMMD) (Burkholderia cepacia (strain AMMD)) protein is Translation initiation factor IF-1 2.